The chain runs to 537 residues: Methionine--tRNA ligase (537 aa).

Residues 11–21 (AYPNAAPHIGH) carry the 'HIGH' region motif. The 'KMSKS' region signature appears at 301–305 (KMSKS). K304 contributes to the ATP binding site. The tract at residues 503–537 (PPPTGVFPRYQPSEIEGADPVKSSSKRREHNKRRE) is disordered. Residues 526 to 537 (SSKRREHNKRRE) are compositionally biased toward basic residues.

This sequence belongs to the class-I aminoacyl-tRNA synthetase family. MetG type 2B subfamily. As to quaternary structure, monomer.

It localises to the cytoplasm. The enzyme catalyses tRNA(Met) + L-methionine + ATP = L-methionyl-tRNA(Met) + AMP + diphosphate. Its function is as follows. Is required not only for elongation of protein synthesis but also for the initiation of all mRNA translation through initiator tRNA(fMet) aminoacylation. The polypeptide is Methionine--tRNA ligase (Mycobacterium leprae (strain TN)).